The chain runs to 319 residues: tRNA U34 carboxymethyltransferase (319 aa).

Residues Lys88, Trp102, Lys107, Gly126, 176-177 (LE), Met192, Tyr196, and Arg311 each bind carboxy-S-adenosyl-L-methionine.

This sequence belongs to the class I-like SAM-binding methyltransferase superfamily. CmoB family. Homotetramer.

The enzyme catalyses carboxy-S-adenosyl-L-methionine + 5-hydroxyuridine(34) in tRNA = 5-carboxymethoxyuridine(34) in tRNA + S-adenosyl-L-homocysteine + H(+). Its function is as follows. Catalyzes carboxymethyl transfer from carboxy-S-adenosyl-L-methionine (Cx-SAM) to 5-hydroxyuridine (ho5U) to form 5-carboxymethoxyuridine (cmo5U) at position 34 in tRNAs. The protein is tRNA U34 carboxymethyltransferase of Pseudomonas syringae pv. syringae (strain B728a).